A 286-amino-acid polypeptide reads, in one-letter code: Pantothenate synthetase (286 aa).

An ATP-binding site is contributed by Met-32 to His-39. Catalysis depends on His-39, which acts as the Proton donor. Residue Gln-63 coordinates (R)-pantoate. Gln-63 provides a ligand contact to beta-alanine. Position 149–152 (Gly-149–Asp-152) interacts with ATP. Gln-155 serves as a coordination point for (R)-pantoate. ATP contacts are provided by residues Leu-178 and Ser-186–Arg-189.

It belongs to the pantothenate synthetase family. Homodimer.

It localises to the cytoplasm. The catalysed reaction is (R)-pantoate + beta-alanine + ATP = (R)-pantothenate + AMP + diphosphate + H(+). Its pathway is cofactor biosynthesis; (R)-pantothenate biosynthesis; (R)-pantothenate from (R)-pantoate and beta-alanine: step 1/1. Functionally, catalyzes the condensation of pantoate with beta-alanine in an ATP-dependent reaction via a pantoyl-adenylate intermediate. The sequence is that of Pantothenate synthetase from Bartonella quintana (strain Toulouse) (Rochalimaea quintana).